The chain runs to 131 residues: uncharacterized protein (131 aa).

This is an uncharacterized protein from Homo sapiens (Human).